Reading from the N-terminus, the 305-residue chain is Phosphatidylinositol:ceramide inositolphosphotransferase 2 (305 aa).

6 consecutive transmembrane segments (helical) span residues 34-54, 81-101, 105-125, 168-188, 198-218, and 221-241; these read LLAGLICQYIHGLAAKGVHYI, ETVFTSVFLSFFLWTFHPFIL, KIYTVLIWCRVLAFLVACQFL, VMYGCGDLIFSSHMIFTLVFV, RFIKLFGWLTAIVQSLLIIAS, and HYSVDVVVAWYTVNLVVFCLD. His-180 is a catalytic residue. Active-site residues include His-221 and Asp-225.

The protein belongs to the sphingomyelin synthase family. In terms of tissue distribution, expressed in leaves, roots, stems, flowers and siliques.

The protein localises to the golgi apparatus. Its subcellular location is the trans-Golgi network membrane. The catalysed reaction is an N-(2R-hydroxy-very-long-chain fatty acyl)-(R)-4-hydroxysphingoid base + a 1,2-diacyl-sn-glycero-3-phospho-(1D-myo-inositol) = a 1D-myo-inositol-1-phospho-N-[(R)-2-hydroxy-very-long-chain fatty acyl]-(R)-4-hydroxysphingoid base + a 1,2-diacyl-sn-glycerol. It participates in sphingolipid metabolism. Catalyzes the transfer of the phosphorylinositol group from phosphatidylinositol (PI) to phytoceramide, an essential step in sphingolipid biosynthesis. May play an important role in modulating plant programmed cell death (PCD) associated with defense (e.g. toward Golovinomyces cichoracearum) by promoting sphingolipid metabolism and thus regulating ceramide accumulation. This Arabidopsis thaliana (Mouse-ear cress) protein is Phosphatidylinositol:ceramide inositolphosphotransferase 2.